Here is a 166-residue protein sequence, read N- to C-terminus: Early E3 18.5 kDa glycoprotein (166 aa).

Residues Met1–Ala19 form the signal peptide. At Asn20–Ile131 the chain is on the lumenal side. Asn31 carries an N-linked (GlcNAc...) asparagine; by host glycan. 2 disulfides stabilise this stretch: Cys32-Cys50 and Cys44-Cys106. N-linked (GlcNAc...) asparagine; by host glycans are attached at residues Asn63, Asn67, and Asn97. The helical transmembrane segment at Ala132–Val152 threads the bilayer. At Thr153–Pro166 the chain is on the cytoplasmic side. The Di-lysine motif motif lies at Lys162–Pro166.

This sequence belongs to the adenoviridae E19 family. In terms of processing, both disulfide bonds are absolutely critical for the interaction with MHC antigens. N-glycosylated; high-mannose.

The protein localises to the host endoplasmic reticulum membrane. In terms of biological role, binds and retains class I heavy chains in the endoplasmic reticulum during the early period of virus infection, thereby impairing their transport to the cell surface. Also delays the expression of class I alleles that it cannot affect by direct retention. Binds transporters associated with antigen processing (TAP) and acts as a tapasin inhibitor, preventing class I/TAP association. In consequence, infected cells are masked for immune recognition by cytotoxic T-lymphocytes. This chain is Early E3 18.5 kDa glycoprotein, found in Human adenovirus B serotype 11 (strain BC34) (HAdV-11).